Reading from the N-terminus, the 166-residue chain is Phosphopantetheine adenylyltransferase (166 aa).

Ser11 lines the substrate pocket. ATP is bound by residues 11 to 12 (SF) and His19. Substrate-binding residues include Lys43, Ala76, and Arg90. Residues 91-93 (GLR), Glu101, and 126-132 (MQPISSS) each bind ATP.

Belongs to the bacterial CoaD family. As to quaternary structure, homohexamer. It depends on Mg(2+) as a cofactor.

It is found in the cytoplasm. The catalysed reaction is (R)-4'-phosphopantetheine + ATP + H(+) = 3'-dephospho-CoA + diphosphate. The protein operates within cofactor biosynthesis; coenzyme A biosynthesis; CoA from (R)-pantothenate: step 4/5. Reversibly transfers an adenylyl group from ATP to 4'-phosphopantetheine, yielding dephospho-CoA (dPCoA) and pyrophosphate. This is Phosphopantetheine adenylyltransferase from Streptococcus uberis (strain ATCC BAA-854 / 0140J).